Here is a 588-residue protein sequence, read N- to C-terminus: L-fucose isomerase (588 aa).

Catalysis depends on proton acceptor residues E335 and D359. Mn(2+)-binding residues include E335, D359, and H525.

This sequence belongs to the L-fucose isomerase family. Requires Mn(2+) as cofactor.

Its subcellular location is the cytoplasm. The enzyme catalyses L-fucose = L-fuculose. The protein operates within carbohydrate degradation; L-fucose degradation; L-lactaldehyde and glycerone phosphate from L-fucose: step 1/3. Its function is as follows. Converts the aldose L-fucose into the corresponding ketose L-fuculose. The protein is L-fucose isomerase of Streptococcus pneumoniae serotype 4 (strain ATCC BAA-334 / TIGR4).